Here is a 364-residue protein sequence, read N- to C-terminus: Fructose-bisphosphate aldolase A (364 aa).

Threonine 9 is subject to Phosphothreonine. 2 positions are modified to phosphoserine: serine 36 and serine 39. Lysine 42 carries the N6-acetyllysine; alternate modification. A Glycyl lysine isopeptide (Lys-Gly) (interchain with G-Cter in SUMO1); alternate cross-link involves residue lysine 42. Lysine 42 is covalently cross-linked (Glycyl lysine isopeptide (Lys-Gly) (interchain with G-Cter in SUMO2); alternate). Arginine 43 is a binding site for beta-D-fructose 1,6-bisphosphate. Serine 46 is modified (phosphoserine). Lysine 99 carries the N6-(2-hydroxyisobutyryl)lysine modification. Residue lysine 108 is modified to N6-acetyllysine. Residue lysine 111 is modified to N6-acetyllysine; alternate. Lysine 111 is modified (N6-malonyllysine; alternate). Serine 132 is subject to Phosphoserine. Lysine 147 is modified (N6-(2-hydroxyisobutyryl)lysine). The active-site Proton acceptor is glutamate 188. Lysine 230 (schiff-base intermediate with dihydroxyacetone-P) is an active-site residue. Serine 272 is modified (phosphoserine). Beta-D-fructose 1,6-bisphosphate-binding positions include 272–274 (SGG), serine 301, and arginine 304. Lysine 312 carries the post-translational modification N6-malonyllysine. Residue lysine 330 is modified to N6-acetyllysine. A Deamidated asparagine; in form beta modification is found at asparagine 361.

Belongs to the class I fructose-bisphosphate aldolase family. Homotetramer. Interacts with SNX9 and WAS. Interacts with FBP2; the interaction blocks FBP2 inhibition by physiological concentrations of AMP and reduces inhibition by Ca(2+). Post-translationally, asn-361 in form alpha is deaminated to Asp in form beta.

The protein resides in the cytoplasm. It is found in the myofibril. The protein localises to the sarcomere. It localises to the i band. Its subcellular location is the m line. It catalyses the reaction beta-D-fructose 1,6-bisphosphate = D-glyceraldehyde 3-phosphate + dihydroxyacetone phosphate. Its pathway is carbohydrate degradation; glycolysis; D-glyceraldehyde 3-phosphate and glycerone phosphate from D-glucose: step 4/4. Functionally, plays a key role in glycolysis and gluconeogenesis. In addition, may also function as scaffolding protein. In Oryctolagus cuniculus (Rabbit), this protein is Fructose-bisphosphate aldolase A (ALDOA).